A 466-amino-acid polypeptide reads, in one-letter code: Phosphomethylpyrimidine synthase (466 aa).

Residues asparagine 80, methionine 109, tyrosine 139, histidine 175, serine 195–glycine 197, aspartate 236–arginine 239, and glutamate 275 each bind substrate. Histidine 279 is a Zn(2+) binding site. Tyrosine 302 provides a ligand contact to substrate. Residue histidine 343 participates in Zn(2+) binding. [4Fe-4S] cluster-binding residues include cysteine 423, cysteine 426, and cysteine 431.

This sequence belongs to the ThiC family. The cofactor is [4Fe-4S] cluster.

It carries out the reaction 5-amino-1-(5-phospho-beta-D-ribosyl)imidazole + S-adenosyl-L-methionine = 4-amino-2-methyl-5-(phosphooxymethyl)pyrimidine + CO + 5'-deoxyadenosine + formate + L-methionine + 3 H(+). It participates in cofactor biosynthesis; thiamine diphosphate biosynthesis. In terms of biological role, catalyzes the synthesis of the hydroxymethylpyrimidine phosphate (HMP-P) moiety of thiamine from aminoimidazole ribotide (AIR) in a radical S-adenosyl-L-methionine (SAM)-dependent reaction. This Prochlorococcus marinus (strain NATL2A) protein is Phosphomethylpyrimidine synthase.